We begin with the raw amino-acid sequence, 159 residues long: Cytochrome c-type biogenesis protein CcmE (159 aa).

At 1–8 the chain is on the cytoplasmic side; sequence MNLRRKNR. A helical; Signal-anchor for type II membrane protein membrane pass occupies residues 9-29; sequence LWVVCAVLAGLALTTALVLYA. At 30-159 the chain is on the periplasmic side; it reads LRANIDLFYT…PQRADKDTSS (130 aa). The interval 129-159 is disordered; that stretch reads KHDENYTPPEVEKAMQENHRRPQRADKDTSS. His130 and Tyr134 together coordinate heme.

Belongs to the CcmE/CycJ family.

The protein localises to the cell inner membrane. Its function is as follows. Heme chaperone required for the biogenesis of c-type cytochromes. Transiently binds heme delivered by CcmC and transfers the heme to apo-cytochromes in a process facilitated by CcmF and CcmH. The chain is Cytochrome c-type biogenesis protein CcmE from Salmonella paratyphi A (strain ATCC 9150 / SARB42).